The chain runs to 103 residues: MYAVIENGGKQYRVTVGDKLRLERMEMEPGAELALDRVLMVGVGDDVQVGRPLVEGAAVKATVLSQGRAKKVHIFKMRRRKHYRKQQGHRQYFTEVRITGIEA.

Belongs to the bacterial ribosomal protein bL21 family. As to quaternary structure, part of the 50S ribosomal subunit. Contacts protein L20.

Functionally, this protein binds to 23S rRNA in the presence of protein L20. The sequence is that of Large ribosomal subunit protein bL21 from Acidithiobacillus ferrooxidans (strain ATCC 23270 / DSM 14882 / CIP 104768 / NCIMB 8455) (Ferrobacillus ferrooxidans (strain ATCC 23270)).